We begin with the raw amino-acid sequence, 286 residues long: Acyl-CoA-binding domain-containing protein 6 (286 aa).

The interval 1-24 (MASPGVLEESSSGEACSGGCPEQW) is disordered. Low complexity predominate over residues 8–22 (EESSSGEACSGGCPE). The 86-residue stretch at 32–117 (LQGQFEQAAK…VKKLDPDWSP (86 aa)) folds into the ACB domain. An acyl-CoA-binding positions include 59–63 (YARYK), Lys-85, and Tyr-104. ANK repeat units lie at residues 182-211 (EGRC…HINM) and 215-244 (EGQT…DPSL).

Its subcellular location is the cytoplasm. It is found in the nucleus. Its function is as follows. Binds long-chain acyl-coenzyme A molecules with a strong preference for unsaturated C18:1-CoA. Does not bind fatty acids. Plays a role in protein N-myristoylation. This chain is Acyl-CoA-binding domain-containing protein 6 (acbd6), found in Xenopus tropicalis (Western clawed frog).